The chain runs to 129 residues: Lysozyme C (129 aa).

In terms of domain architecture, C-type lysozyme spans 1-129; the sequence is KVYGRCELAA…VSVWTRGCRL (129 aa). 4 disulfide bridges follow: Cys6-Cys127, Cys30-Cys115, Cys64-Cys80, and Cys76-Cys94. Active-site residues include Glu35 and Asp52.

This sequence belongs to the glycosyl hydrolase 22 family. Monomer.

It localises to the secreted. It catalyses the reaction Hydrolysis of (1-&gt;4)-beta-linkages between N-acetylmuramic acid and N-acetyl-D-glucosamine residues in a peptidoglycan and between N-acetyl-D-glucosamine residues in chitodextrins.. Functionally, lysozymes have primarily a bacteriolytic function; those in tissues and body fluids are associated with the monocyte-macrophage system and enhance the activity of immunoagents. In Lophura leucomelanos (Kalij pheasant), this protein is Lysozyme C (LYZ).